We begin with the raw amino-acid sequence, 1808 residues long: Tenascin (1808 aa).

The N-terminal stretch at 1 to 22 is a signal peptide; the sequence is MGLPSQVLACAILGLLYQHASG. Positions 23-33 are excised as a propeptide; it reads GLIKRIIRQKR. N-linked (GlcNAc...) asparagine glycosylation is present at Asn-38. A glycan (O-linked (Xyl...) (chondroitin sulfate) serine) is linked at Ser-72. Residues 118 to 142 are a coiled coil; that stretch reads DIKDLLSRLEELEGLVSSLREQCAS. N-linked (GlcNAc...) asparagine glycans are attached at residues Asn-168 and Asn-186. One can recognise an EGF-like 1; incomplete domain in the interval 176-188; sequence CVCEPGWKGPNCS. EGF-like domains follow at residues 188–219, 219–250, 250–281, 281–312, 312–343, 343–374, 374–405, 405–436, 436–467, 467–498, 498–529, 529–560, and 560–591; these read SEPA…EDCS, SQAA…PDCG, GEEL…EDCN, NEPL…EDCG, GELI…EDCG, GELT…DDCS, SQKR…EDCG, GELR…EDCG, GELS…EDCR, and RERS…IDCS. 39 disulfide bridges follow: Cys-192–Cys-202, Cys-196–Cys-207, Cys-209–Cys-218, Cys-223–Cys-233, Cys-227–Cys-238, Cys-240–Cys-249, Cys-254–Cys-264, Cys-258–Cys-269, Cys-271–Cys-280, Cys-285–Cys-295, Cys-289–Cys-300, Cys-302–Cys-311, Cys-316–Cys-326, Cys-320–Cys-331, Cys-333–Cys-342, Cys-347–Cys-357, Cys-351–Cys-362, Cys-364–Cys-373, Cys-378–Cys-388, Cys-382–Cys-393, Cys-395–Cys-404, Cys-409–Cys-419, Cys-413–Cys-424, Cys-426–Cys-435, Cys-440–Cys-450, Cys-444–Cys-455, Cys-457–Cys-466, Cys-471–Cys-481, Cys-475–Cys-486, Cys-488–Cys-497, Cys-502–Cys-512, Cys-506–Cys-517, Cys-519–Cys-528, Cys-533–Cys-543, Cys-537–Cys-548, Cys-550–Cys-559, Cys-564–Cys-574, Cys-568–Cys-579, and Cys-581–Cys-590. Residue Asn-328 is glycosylated (N-linked (GlcNAc...) asparagine). Fibronectin type-III domains lie at 595 to 685, 686 to 775, 776 to 866, 867 to 957, 958 to 1046, 1047 to 1138, 1139 to 1228, 1229 to 1318, 1319 to 1408, 1409 to 1495, and 1496 to 1584; these read PPTE…LPAP, EGLK…TKLD, APSQ…DLDA, PRNL…TDLD, NPKD…EEEP, ELGN…AHPE, VGEL…EAEP, EVDN…TVVG, SPKG…ALDS, PSGL…TGLD, and APKD…TGLL. Asn-603, Asn-643, Asn-751, and Asn-759 each carry an N-linked (GlcNAc...) asparagine glycan. Asn-1050, Asn-1090, Asn-1101, Asn-1112, Asn-1153, and Asn-1183 each carry an N-linked (GlcNAc...) asparagine glycan. Residue Asn-1416 is glycosylated (N-linked (GlcNAc...) asparagine). The region spanning 1582 to 1797 is the Fibrinogen C-terminal domain; it reads GLLYPYPKDC…FAEMKLRPSS (216 aa). N-linked (GlcNAc...) asparagine glycans are attached at residues Asn-1736 and Asn-1769.

The protein belongs to the tenascin family. Homohexamer; disulfide-linked. A homotrimer may be formed in the triple coiled-coil region and may be stabilized by disulfide rings at both ends. Two of such half-hexabrachions may be disulfide linked within the central globule. Interacts with CSPG5. In terms of tissue distribution, expressed in the brain.

The protein resides in the secreted. The protein localises to the extracellular space. It is found in the extracellular matrix. In terms of biological role, extracellular matrix protein implicated in guidance of migrating neurons as well as axons during development, synaptic plasticity as well as neuronal regeneration. Ligand for integrins alpha-8/beta-1, alpha-9/beta-1, alpha-V/beta-3 and alpha-V/beta-6. This chain is Tenascin (TNC), found in Gallus gallus (Chicken).